The following is a 565-amino-acid chain: Sulfite reductase [NADPH] hemoprotein beta-component (565 aa).

Residues cysteine 429, cysteine 435, cysteine 474, and cysteine 478 each coordinate [4Fe-4S] cluster. Cysteine 478 serves as a coordination point for siroheme.

The protein belongs to the nitrite and sulfite reductase 4Fe-4S domain family. In terms of assembly, alpha(8)-beta(8). The alpha component is a flavoprotein, the beta component is a hemoprotein. Requires siroheme as cofactor. The cofactor is [4Fe-4S] cluster.

The catalysed reaction is hydrogen sulfide + 3 NADP(+) + 3 H2O = sulfite + 3 NADPH + 4 H(+). It participates in sulfur metabolism; hydrogen sulfide biosynthesis; hydrogen sulfide from sulfite (NADPH route): step 1/1. In terms of biological role, component of the sulfite reductase complex that catalyzes the 6-electron reduction of sulfite to sulfide. This is one of several activities required for the biosynthesis of L-cysteine from sulfate. This Shewanella oneidensis (strain ATCC 700550 / JCM 31522 / CIP 106686 / LMG 19005 / NCIMB 14063 / MR-1) protein is Sulfite reductase [NADPH] hemoprotein beta-component.